The following is an 89-amino-acid chain: HssA/B-like protein 14 (89 aa).

This sequence belongs to the hssA/B family.

This Dictyostelium discoideum (Social amoeba) protein is HssA/B-like protein 14 (hssl14).